Consider the following 481-residue polypeptide: Glutamate mutase epsilon subunit (481 aa).

Arg67 provides a ligand contact to L-glutamate. An adenosylcob(III)alamin-binding site is contributed by Gly69. Residue Arg99 coordinates L-glutamate. Asn122 is an adenosylcob(III)alamin binding site. L-glutamate is bound by residues 148-149 (RH), Glu170, and Tyr176. Pro179 contacts adenosylcob(III)alamin. Residue Tyr180 participates in L-glutamate binding. Positions 296, 325, 329, and 333 each coordinate adenosylcob(III)alamin.

This sequence belongs to the methylaspartate mutase GlmE subunit family. Heterotetramer composed of 2 epsilon subunits (GlmE) and 2 sigma subunits (GlmS). GlmE exists as a homodimer and GlmS as a monomer. Adenosylcob(III)alamin serves as cofactor.

The enzyme catalyses (2S,3S)-3-methyl-L-aspartate = L-glutamate. It participates in amino-acid degradation; L-glutamate degradation via mesaconate pathway; acetate and pyruvate from L-glutamate: step 1/4. In terms of biological role, catalyzes the carbon skeleton rearrangement of L-glutamate to L-threo-3-methylaspartate ((2S,3S)-3-methylaspartate). The polypeptide is Glutamate mutase epsilon subunit (Yersinia enterocolitica serotype O:8 / biotype 1B (strain NCTC 13174 / 8081)).